The chain runs to 316 residues: MPVLLECLSHTPLSGYCDPAPEVVAEVGRIHAAARARVADFDPQLVVVFAPDHYNGFFYDVMPPFCIGASASAVGDFGSLAGQLAVPADLALDLAQAVLAADVDVALSYRMQVDHGCAQALEILTGSLDRYPVVPVFINSVAPPMASCRRARLLGDALGRSLARSGQRVLVIGSGGISHEPPVPELAGATDEVAERLIAGRNPSREARAARQARTVAAARAFAAGDSRLHPLNPEWDRAFLKLLEEGQLPALDGFTDSAITREAGKSAHEVRTWIAAFGALQAYGPYRATLDYYRPIPEWIAGFGAMHARPIAETA.

The active-site Proton donor is histidine 115. The Proton acceptor role is filled by histidine 179.

It belongs to the LigB/MhpB extradiol dioxygenase family. As to quaternary structure, homotetramer. Fe(2+) is required as a cofactor.

It catalyses the reaction 3-(2,3-dihydroxyphenyl)propanoate + O2 = (2Z,4E)-2-hydroxy-6-oxonona-2,4-dienedioate + H(+). The enzyme catalyses (2E)-3-(2,3-dihydroxyphenyl)prop-2-enoate + O2 = (2Z,4E,7E)-2-hydroxy-6-oxonona-2,4,7-trienedioate + H(+). Its pathway is aromatic compound metabolism; 3-phenylpropanoate degradation. Its function is as follows. Catalyzes the non-heme iron(II)-dependent oxidative cleavage of 2,3-dihydroxyphenylpropionic acid and 2,3-dihydroxicinnamic acid into 2-hydroxy-6-ketononadienedioate and 2-hydroxy-6-ketononatrienedioate, respectively. The chain is 2,3-dihydroxyphenylpropionate/2,3-dihydroxicinnamic acid 1,2-dioxygenase from Paraburkholderia xenovorans (strain LB400).